A 180-amino-acid polypeptide reads, in one-letter code: Large ribosomal subunit protein uL6 (180 aa).

The protein belongs to the universal ribosomal protein uL6 family. As to quaternary structure, part of the 50S ribosomal subunit.

This protein binds to the 23S rRNA, and is important in its secondary structure. It is located near the subunit interface in the base of the L7/L12 stalk, and near the tRNA binding site of the peptidyltransferase center. In Thermus aquaticus, this protein is Large ribosomal subunit protein uL6.